The primary structure comprises 185 residues: Peptidyl-tRNA hydrolase (185 aa).

Tyrosine 14 contacts tRNA. Histidine 19 functions as the Proton acceptor in the catalytic mechanism. Tyrosine 64, asparagine 66, and asparagine 112 together coordinate tRNA.

Belongs to the PTH family. In terms of assembly, monomer.

It is found in the cytoplasm. It catalyses the reaction an N-acyl-L-alpha-aminoacyl-tRNA + H2O = an N-acyl-L-amino acid + a tRNA + H(+). Hydrolyzes ribosome-free peptidyl-tRNAs (with 1 or more amino acids incorporated), which drop off the ribosome during protein synthesis, or as a result of ribosome stalling. Its function is as follows. Catalyzes the release of premature peptidyl moieties from peptidyl-tRNA molecules trapped in stalled 50S ribosomal subunits, and thus maintains levels of free tRNAs and 50S ribosomes. This Lactobacillus helveticus (strain DPC 4571) protein is Peptidyl-tRNA hydrolase.